We begin with the raw amino-acid sequence, 885 residues long: Leucine--tRNA ligase (885 aa).

A 'HIGH' region motif is present at residues 48–58 (PYPSGKLHMGH). Positions 639–643 (TMSKS) match the 'KMSKS' region motif. Lysine 642 is an ATP binding site.

Belongs to the class-I aminoacyl-tRNA synthetase family.

The protein localises to the cytoplasm. It carries out the reaction tRNA(Leu) + L-leucine + ATP = L-leucyl-tRNA(Leu) + AMP + diphosphate. This is Leucine--tRNA ligase from Bordetella bronchiseptica (strain ATCC BAA-588 / NCTC 13252 / RB50) (Alcaligenes bronchisepticus).